Reading from the N-terminus, the 421-residue chain is 4-aminobutyrate aminotransferase PuuE (421 aa).

Pyridoxal 5'-phosphate-binding positions include 110-111 (GA) and 238-241 (DEVQ). Position 267 is an N6-(pyridoxal phosphate)lysine (lysine 267). Pyridoxal 5'-phosphate is bound at residue threonine 296.

This sequence belongs to the class-III pyridoxal-phosphate-dependent aminotransferase family. It depends on pyridoxal 5'-phosphate as a cofactor.

The enzyme catalyses 4-aminobutanoate + 2-oxoglutarate = succinate semialdehyde + L-glutamate. It functions in the pathway amine and polyamine degradation; putrescine degradation; succinate semialdehyde from 4-aminobutanoate. With respect to regulation, completely inhibited by succinate and low-aeration conditions. In terms of biological role, catalyzes the transfer of the amino group from gamma-aminobutyrate (GABA) to alpha-ketoglutarate (KG) to yield succinic semialdehyde (SSA). PuuE is important for utilization of putrescine as the sole nitrogen or carbon source. The sequence is that of 4-aminobutyrate aminotransferase PuuE (puuE) from Escherichia coli (strain K12).